Here is a 1199-residue protein sequence, read N- to C-terminus: DNA-directed RNA polymerase subunit beta (1199 aa).

The segment at 1175–1199 is disordered; that stretch reads EEKKAHEAAAQATDGKSANSTDDKK. The segment covering 1188–1199 has biased composition (polar residues); that stretch reads DGKSANSTDDKK.

This sequence belongs to the RNA polymerase beta chain family. As to quaternary structure, the RNAP catalytic core consists of 2 alpha, 1 beta, 1 beta' and 1 omega subunit. When a sigma factor is associated with the core the holoenzyme is formed, which can initiate transcription.

It catalyses the reaction RNA(n) + a ribonucleoside 5'-triphosphate = RNA(n+1) + diphosphate. Its function is as follows. DNA-dependent RNA polymerase catalyzes the transcription of DNA into RNA using the four ribonucleoside triphosphates as substrates. The polypeptide is DNA-directed RNA polymerase subunit beta (Lacticaseibacillus casei (strain BL23) (Lactobacillus casei)).